The following is a 493-amino-acid chain: uncharacterized protein (493 aa).

Residues 10 to 30 (LVPSTRFALSLVMFFGCLVTY) traverse the membrane as a helical segment. 3 N-linked (GlcNAc...) asparagine glycosylation sites follow: Asn35, Asn47, and Asn69. A run of 6 helical transmembrane segments spans residues 85–105 (MVLSSFFYGYIGSQIIGGHLA), 112–132 (RVVFVTILGSALLTLLNPVAA), 144–164 (AAIGFLQGATFPAMHTMWSVW), 175–195 (GVTYAGAQIGNVIVLPLSGFL), 205–225 (PSIFYIIGVFGVLWTAVWWYV), and 272–292 (AVWACWAGHFAGDWGAYTMLV). Residue Asn305 is glycosylated (N-linked (GlcNAc...) asparagine). 4 consecutive transmembrane segments (helical) span residues 311–331 (AVASIPYIAYFLAINAGGVLA), 348–368 (AAMLVALIGQGIFLVASGYCG), 375–395 (VIIFITCGMAISGLQYAGFVV), and 406–426 (GTVMGTGNTISALAGIISPAV). An N-linked (GlcNAc...) asparagine glycan is attached at Asn433. A helical transmembrane segment spans residues 441–461 (MVLWLTAGILTIGALLFSIFA).

The protein belongs to the major facilitator superfamily. Sodium/anion cotransporter family.

Its subcellular location is the membrane. This is an uncharacterized protein from Caenorhabditis elegans.